The primary structure comprises 304 residues: N-acetyl-D-glucosamine kinase (304 aa).

Residues 4–11 (GFDMGGTK) and 133–140 (GVGGGLIV) contribute to the ATP site. 4 residues coordinate Zn(2+): histidine 157, cysteine 177, cysteine 179, and cysteine 184.

The protein belongs to the ROK (NagC/XylR) family. NagK subfamily.

The catalysed reaction is N-acetyl-D-glucosamine + ATP = N-acetyl-D-glucosamine 6-phosphate + ADP + H(+). Its pathway is cell wall biogenesis; peptidoglycan recycling. Catalyzes the phosphorylation of N-acetyl-D-glucosamine (GlcNAc) derived from cell-wall degradation, yielding GlcNAc-6-P. The chain is N-acetyl-D-glucosamine kinase from Yersinia pseudotuberculosis serotype IB (strain PB1/+).